The following is a 243-amino-acid chain: Orotidine 5'-phosphate decarboxylase (243 aa).

Substrate-binding positions include aspartate 18, lysine 39, 66–75, threonine 130, arginine 192, glutamine 201, glycine 221, and arginine 222; that span reads DLKFHDIPAT. The active-site Proton donor is lysine 68.

The protein belongs to the OMP decarboxylase family. Type 1 subfamily. In terms of assembly, homodimer.

It carries out the reaction orotidine 5'-phosphate + H(+) = UMP + CO2. It participates in pyrimidine metabolism; UMP biosynthesis via de novo pathway; UMP from orotate: step 2/2. Functionally, catalyzes the decarboxylation of orotidine 5'-monophosphate (OMP) to uridine 5'-monophosphate (UMP). This Synechococcus sp. (strain WH7803) protein is Orotidine 5'-phosphate decarboxylase.